We begin with the raw amino-acid sequence, 37 residues long: MKVRASVKTMCEKCKIVKRNGVVRNICTNPKHKQRQG.

Belongs to the bacterial ribosomal protein bL36 family.

The chain is Large ribosomal subunit protein bL36 from Dehalococcoides mccartyi (strain ATCC BAA-2266 / KCTC 15142 / 195) (Dehalococcoides ethenogenes (strain 195)).